We begin with the raw amino-acid sequence, 109 residues long: MGGASKKPISTVEKRMKKMAEEQQKKQQKRATTKTGKELTSKNVVIDNETLKKVQEELKKETIVTPYTLSTKLNVTISVAKKILEELERQGVVKIGTKDRRTAVYIAAS.

The tract at residues 1-36 is disordered; the sequence is MGGASKKPISTVEKRMKKMAEEQQKKQQKRATTKTG. Positions 12 to 25 are enriched in basic and acidic residues; the sequence is VEKRMKKMAEEQQK.

This sequence belongs to the eukaryotic ribosomal protein eS25 family.

This chain is Small ribosomal subunit protein eS25 (rps25e), found in Sulfurisphaera tokodaii (strain DSM 16993 / JCM 10545 / NBRC 100140 / 7) (Sulfolobus tokodaii).